The chain runs to 1467 residues: Actin cytoskeleton-regulatory complex protein pan1 (1467 aa).

Residues 1-157 are disordered; it reads MYSSSNSFLG…PPPKSSGSKI (157 aa). Residues 25–48 show a composition bias toward low complexity; that stretch reads QPPYSQLPQGQQQIPQQTGFQPQP. Polar residues predominate over residues 50–75; sequence GYGSQSASHLQPQPTGFPTGQLQPQF. Residues 77–101 show a composition bias toward low complexity; the sequence is GFPGAAPPQQQQQFGGYQAPAQQPQ. The span at 129–139 shows a compositional bias: polar residues; it reads RTSSEIANSFS. Residues 169 to 257 form the EH 1 domain; that stretch reads DQAKFEQLFK…DKIKNEVSGM (89 aa). Residues 201-236 enclose the EF-hand 1 domain; it reads LPGSELSKIWVLSDTTKSGQLFFPEFALAMYLCNLR. Residues 266–376 are disordered; sequence PDTEPQGAAR…PQATGYNGPR (111 aa). Pro residues predominate over residues 292–301; it reads PPAPQHPKPQ. Polar residues-rich tracts occupy residues 305 to 314 and 340 to 370; these read NAQFLSQLAA and LAPQ…PQAT. Residues 458–547 enclose the EH 2 domain; sequence EKKIYDDLFR…PELIPPSTRN (90 aa). An EF-hand 2 domain is found at 491–526; sequence LDRKDLERIWTLADPNNRGRLNMDEFAVAMHLIYRK. Disordered stretches follow at residues 613-643, 822-864, 888-1087, and 1101-1467; these read AGYR…EELS, RADR…HERR, RTAH…ELLK, and EQVR…RVLD. Positions 634-758 form a coiled coil; the sequence is TSQASEEELS…LFRLKDAKAH (125 aa). Residues 892–912 are compositionally biased toward basic and acidic residues; that stretch reads IRKEEESRASAQEQRLRHEEP. The segment covering 919–934 has biased composition (low complexity); sequence LSPAPSAGSAGSLPGS. Composition is skewed to basic and acidic residues over residues 935-953, 973-1009, 1054-1087, 1101-1129, and 1136-1153; these read THED…RIAE, RQER…EQRS, AARE…ELLK, EQVR…EKEA, and AEIE…LELE. Residues 965-1162 are a coiled coil; that stretch reads DTSETLLQRQ…ERLDEESSSD (198 aa). Residues 1154 to 1165 are compositionally biased toward acidic residues; that stretch reads RLDEESSSDDEG. Polar residues predominate over residues 1171–1182; it reads PEDSTPTQSQLL. The segment covering 1183–1197 has biased composition (low complexity); the sequence is PTVTPAAPVSAPESE. Residues 1279-1288 show a composition bias toward basic and acidic residues; the sequence is LERKSRARPE. Pro residues-rich tracts occupy residues 1369 to 1381 and 1389 to 1430; these read AAPP…PPAA and VAPP…PTPA. One can recognise a WH2 domain in the interval 1434–1451; it reads DRSALLASIQKGKGLRKV.

The protein belongs to the PAN1 family. Component of the PAN1 actin cytoskeleton-regulatory complex.

It is found in the cell membrane. It localises to the endosome membrane. The protein localises to the cytoplasm. The protein resides in the cytoskeleton. Its subcellular location is the actin patch. Component of the PAN1 actin cytoskeleton-regulatory complex required for the internalization of endosomes during actin-coupled endocytosis. The complex links the site of endocytosis to the cell membrane-associated actin cytoskeleton. Mediates uptake of external molecules and vacuolar degradation of plasma membrane proteins. Plays a role in the proper organization of the cell membrane-associated actin cytoskeleton and promotes its destabilization. This is Actin cytoskeleton-regulatory complex protein pan1 (pan1) from Aspergillus fumigatus (strain CBS 144.89 / FGSC A1163 / CEA10) (Neosartorya fumigata).